The primary structure comprises 203 residues: Outer-membrane lipoprotein carrier protein (203 aa).

Positions 1 to 21 are cleaved as a signal peptide; the sequence is MKKMAIACALLSSVVASSVWA. The disordered stretch occupies residues 178-203; the sequence is QQNGAVEPSKFTFTPPQGVTIDDQRK.

The protein belongs to the LolA family. As to quaternary structure, monomer.

The protein resides in the periplasm. Its function is as follows. Participates in the translocation of lipoproteins from the inner membrane to the outer membrane. Only forms a complex with a lipoprotein if the residue after the N-terminal Cys is not an aspartate (The Asp acts as a targeting signal to indicate that the lipoprotein should stay in the inner membrane). The protein is Outer-membrane lipoprotein carrier protein of Salmonella typhi.